A 158-amino-acid polypeptide reads, in one-letter code: Non-secretory ribonuclease (158 aa).

The first 27 residues, 1-27 (MVPKLFTSQICLLLLLGLSSLEVSLHA), serve as a signal peptide directing secretion. The C-linked (Man) tryptophan glycan is linked to Trp34. His42 serves as the catalytic Proton acceptor. Tyr60 carries the post-translational modification 3'-nitrotyrosine. Residue 65 to 69 (KNRNT) coordinates substrate. N-linked (GlcNAc...) asparagine glycosylation is found at Asn86, Asn92, and Asn111. The active-site Proton donor is the His153.

This sequence belongs to the pancreatic ribonuclease family. As to quaternary structure, interacts with and forms a tight 1:1 complex with RNH1. Dimerization of two such complexes may occur.

The protein localises to the lysosome. Its subcellular location is the cytoplasmic granule. The catalysed reaction is an [RNA] containing cytidine + H2O = an [RNA]-3'-cytidine-3'-phosphate + a 5'-hydroxy-ribonucleotide-3'-[RNA].. It carries out the reaction an [RNA] containing uridine + H2O = an [RNA]-3'-uridine-3'-phosphate + a 5'-hydroxy-ribonucleotide-3'-[RNA].. Its function is as follows. This is a non-secretory ribonuclease. It is a pyrimidine specific nuclease with a slight preference for U. Cytotoxin and helminthotoxin. Possesses a wide variety of biological activities. The polypeptide is Non-secretory ribonuclease (RNASE2) (Saguinus labiatus (Red-chested mustached tamarin)).